We begin with the raw amino-acid sequence, 435 residues long: Monodehydroascorbate reductase 3, cytosolic (435 aa).

Residues 14–17 (GGVA), Glu-41, Arg-48, Lys-53, Ile-96, and 147–148 (RE) contribute to the FAD site. NAD(+) contacts are provided by residues 172–178 (GGYIGLE), Glu-196, Arg-202, and Gly-261. 174–178 (YIGLE) lines the NADP(+) pocket. Positions 202 and 261 each coordinate NADP(+). Position 298 (Asp-298) interacts with FAD. 314 to 315 (EH) provides a ligand contact to NAD(+). Residue 314–315 (EH) coordinates NADP(+). Val-316 provides a ligand contact to FAD. Arg-320 serves as a coordination point for L-ascorbate. An FAD-binding site is contributed by Tyr-349. Tyr-349 is an NAD(+) binding site. Residue Tyr-349 participates in NADP(+) binding. Residue Arg-351 participates in L-ascorbate binding.

This sequence belongs to the FAD-dependent oxidoreductase family. The cofactor is FAD.

It localises to the cytoplasm. The enzyme catalyses 2 monodehydro-L-ascorbate radical + NADH + H(+) = 2 L-ascorbate + NAD(+). Functionally, catalyzes the conversion of monodehydroascorbate to ascorbate, oxidizing NADH in the process. Ascorbate is a major antioxidant against reactive oxygen species (ROS) and nitric oxide (NO). Can use NADPH as electron donor, but possesses lower activity compared to NADH as electron donor. In Oryza sativa subsp. japonica (Rice), this protein is Monodehydroascorbate reductase 3, cytosolic.